The sequence spans 217 residues: Large ribosomal subunit protein uL1 (217 aa).

Ser2 is modified (N-acetylserine). Position 11 is a phosphotyrosine (Tyr11). An N6-acetyllysine mark is found at Lys91 and Lys106. Lys118 is subject to N6-acetyllysine; alternate. Lys118 participates in a covalent cross-link: Glycyl lysine isopeptide (Lys-Gly) (interchain with G-Cter in SUMO1); alternate. A Glycyl lysine isopeptide (Lys-Gly) (interchain with G-Cter in SUMO2); alternate cross-link involves residue Lys118. Lys161 is covalently cross-linked (Glycyl lysine isopeptide (Lys-Gly) (interchain with G-Cter in SUMO2)).

Belongs to the universal ribosomal protein uL1 family. Component of the large ribosomal subunit.

The protein resides in the cytoplasm. Its function is as follows. Component of the large ribosomal subunit. The ribosome is a large ribonucleoprotein complex responsible for the synthesis of proteins in the cell. The chain is Large ribosomal subunit protein uL1 (Rpl10a) from Mus musculus (Mouse).